Reading from the N-terminus, the 1013-residue chain is Nucleotide-binding oligomerization domain-containing protein 2 (1013 aa).

CARD domains lie at 1 to 95 (MCAQ…LPSS) and 99 to 191 (HSPH…EDAA). Residues 36–50 (REVLSWEDYEGLSLV) carry the ATG16L1-binding motif motif. The tract at residues 82–106 (EAQADSQPPELPSSWDPHSPHPARD) is disordered. ADP is bound by residues Thr212, Tyr225, Thr226, Gly275, Ser276, Gly277, Lys278, Ser279, and Thr280. A required for CARD9 binding region spans residues 214 to 247 (DGAENLCLEEVYTENVLEIQMEVGMAGPSQQSPT). The region spanning 266 to 591 (DTVLVVGEAG…FFAAFYLALS (326 aa)) is the NACHT domain. Residue 272–279 (GEAGSGKS) coordinates ATP. Cys368 carries the S-palmitoyl cysteine lipid modification. His576 contacts ADP. 9 LRR repeats span residues 764-785 (RPVA…QLLP), 789-809 (VCKA…CKLV), 817-838 (QLQK…SMAR), 845-866 (NFLA…VLAQ), 873-893 (SLQF…QALA), 901-922 (SLRW…ALAL), 929-949 (ALEE…CFLA), 957-978 (SLKV…ALLR), and 985-1008 (TILE…SHQD).

This sequence belongs to the NOD1-NOD2 family. Homooligomer: homooligomerizes following muramyl dipeptide (MDP)-binding, promoting RIPK2 recruitment. Interacts (via CARD domain) with RIPK2 (via CARD domain). Following RIPK2 recruitment, RIPK2 homooligomerizes via its CARD domain and forms long filaments named RIPosomes. Interacts (via CARD domain) with ubiquitin; inhibiting interaction with RIPK2. Component of a signaling complex consisting of ARHGEF2, NOD2 and RIPK2. Interacts with ANKRD17 (via N-terminus). Interacts with HSPA1A; the interaction enhances NOD2 stability. Interacts (via both CARD domains) with HSP90; the interaction enhances NOD2 stability. Interacts (via CARD domain) with SOCS3; the interaction promotes NOD2 degradation. Interacts (via CARD domain) with ERBIN; the interaction inhibits activation of NOD2. Interacts with MAPKBP1; the interaction is enhanced in the presence of muramyl dipeptide (MDP) and inhibits NOD2 homooligomerization and activation. Interacts with INAVA; the interaction takes place upon Pattern recognition receptor (PRR) stimulation. Interacts (via NACHT domain) with CARD9. Interacts (via CARD domain) with CASP1; this interaction leads to IL1B processing. Also interacts with CASP4. Interacts with NLRP1; this interaction is enhanced in the presence of muramyl dipeptide (MDP) and leads to increased IL1B release. Interacts with NLRP12; this interaction promotes degradation of NOD2 through the ubiquitin-proteasome pathway. Interacts with ANKHD1, C10orf67, CHMP5, DOCK7, ENTR1, KRT15, LDOC1, PPP1R12C, PPP2R3B, TRIM41 and VIM. Interacts with MAVS; interaction takes place following single-stranded RNA (ssRNA)-binding. Interacts with ATG16L1. Interacts with IRGM; promoting IRGM 'Lys-63'-linked polyubiquitination, which is required for interactions with the core autophagy factors. Post-translationally, palmitoylated by ZDHHC5; palmitoylation is required for proper recruitment to the bacterial entry site and hence for proper signaling upon cognate peptidoglycan detection. Palmitoylation promotes localization to the cell membrane. Palmitoylation protects from SQSTM1/p62-dependent autophagic degradation. In terms of processing, polyubiquitinated by TRIM27, leading to proteasome-mediated degradation. Polyubiquitinated and degraded following muramyl dipeptide (MDP) stimulation, conferring MDP tolerance and preventing septic shock. Degraded via selective autophagy following interaction with IRGM. IRGM promotes NOD2-RIPK2 RIPosome recruitment to autophagosome membranes, promoting their SQSTM1/p62-dependent autophagic degradation. Post-translationally, O-glycosylated by OGT, O-GlcNAcylation increases protein stability.

The protein resides in the cell membrane. Its subcellular location is the basolateral cell membrane. The protein localises to the cytoplasm. It is found in the mitochondrion. ADP-binding promotes an inactive closed conformation. Its function is as follows. Pattern recognition receptor (PRR) that detects bacterial peptidoglycan fragments and other danger signals and plays an important role in gastrointestinal immunity. Specifically activated by muramyl dipeptide (MDP), a fragment of bacterial peptidoglycan found in every bacterial peptidoglycan type. NOD2 specifically recognizes and binds 6-O-phospho-MDP, the phosphorylated form of MDP, which is generated by NAGK. 6-O-phospho-MDP-binding triggers oligomerization that facilitates the binding and subsequent activation of the proximal adapter receptor-interacting RIPK2. Following recruitment, RIPK2 undergoes 'Met-1'- (linear) and 'Lys-63'-linked polyubiquitination by E3 ubiquitin-protein ligases XIAP, BIRC2, BIRC3 and the LUBAC complex, becoming a scaffolding protein for downstream effectors, triggering activation of the NF-kappa-B and MAP kinases signaling. This in turn leads to the transcriptional activation of hundreds of genes involved in immune response. Its ability to detect bacterial MDP plays a central role in maintaining the equilibrium between intestinal microbiota and host immune responses to control inflammation. An imbalance in this relationship results in dysbiosis, whereby pathogenic bacteria prevail on commensals, causing damage in the intestinal epithelial barrier as well as allowing bacterial invasion and inflammation. Acts as a regulator of appetite by sensing MDP in a subset of brain neurons: microbiota-derived MDP reach the brain, where they bind and activate NOD2 in inhibitory hypothalamic neurons, decreasing neuronal activity, thereby regulating satiety and body temperature. NOD2-dependent MDP-sensing of bacterial cell walls in the intestinal epithelial compartment contributes to sustained postnatal growth upon undernutrition. Also plays a role in antiviral response by acting as a sensor of single-stranded RNA (ssRNA) from viruses: upon ssRNA-binding, interacts with MAVS, leading to activation of interferon regulatory factor-3/IRF3 and expression of type I interferon. Also acts as a regulator of autophagy in dendritic cells via its interaction with ATG16L1, possibly by recruiting ATG16L1 at the site of bacterial entry. NOD2 activation in the small intestine crypt also contributes to intestinal stem cells survival and function: acts by promoting mitophagy via its association with ATG16L1. In addition to its main role in innate immunity, also regulates the adaptive immune system by acting as regulator of helper T-cell and regulatory T-cells (Tregs). Besides recognizing pathogens, also involved in the endoplasmic reticulum stress response: acts by sensing and binding to the cytosolic metabolite sphingosine-1-phosphate generated in response to endoplasmic reticulum stress, initiating an inflammation process that leads to activation of the NF-kappa-B and MAP kinases signaling. May also be involved in NLRP1 activation following activation by MDP, leading to CASP1 activation and IL1B release in macrophages. This Bos taurus (Bovine) protein is Nucleotide-binding oligomerization domain-containing protein 2 (NOD2).